A 368-amino-acid polypeptide reads, in one-letter code: F-box/kelch-repeat protein At2g44700 (368 aa).

Positions 1–23 are disordered; it reads MSSSNEPPRKTDQPSSSSASASA. A compositionally biased stretch (low complexity) spans 14 to 23; that stretch reads PSSSSASASA. Residues 25–71 enclose the F-box domain; sequence PSLFLSLPLEIISMILARVPKRYYPILCSVSKNMRSLVRSPEIHKAR. One copy of the Kelch repeat lies at 177–221; that stretch reads KVYVIGGYQDDEIAAESFDLNTQTWEAAPIPDEKESHRWICKANV.

In Arabidopsis thaliana (Mouse-ear cress), this protein is F-box/kelch-repeat protein At2g44700.